Reading from the N-terminus, the 320-residue chain is Probable L,D-transpeptidase YcfS (320 aa).

The signal sequence occupies residues 1 to 23 (MMIKTRFSRWLTFFTFAAAVALA). The LysM domain occupies 45–90 (KFHVVENDGGSLEAIAKKYNVGFLALLQANPGVDPYVPRAGSVLTI). One can recognise a L,D-TPase catalytic domain in the interval 102 to 241 (EGIVINIAEL…VTPGTKVNII (140 aa)). His201 acts as the Proton donor/acceptor in catalysis. Cys217 functions as the Nucleophile in the catalytic mechanism.

The protein belongs to the YkuD family. Interacts with DsbG.

The protein localises to the periplasm. It functions in the pathway cell wall biogenesis; peptidoglycan biosynthesis. In terms of biological role, responsible, at least in part, for anchoring of the major outer membrane lipoprotein (Lpp, also known as the Braun lipoprotein) to the peptidoglycan via a meso-diaminopimelyl-L-Lys- bond on the terminal residue of Lpp. This is Probable L,D-transpeptidase YcfS (ycfS) from Escherichia coli (strain K12).